Reading from the N-terminus, the 252-residue chain is MALTVLAATALTALIMGKNNGTLMDHDKVKPFAQPIPTNSFEEAAVKYKPELFVSYGCHPYPAVQANGSVSAGLEGSGPDDGECKGSRLGSQVYSRSDWYNDKWAIMYTWYLPKGRSGKLQDRHFWETAVIWIDDPTLEDSKLLGVSLNYEDRRVSKIAIKGRHLNASKVLKFESYEAEKSPKPRLRFTEKAGKTQDLITWDQLPAKARKGLSTTKFYSSPFGSVKREMPLKDEVFLKRLKDAWPFSNKHDE.

The first 17 residues, 1 to 17 (MALTVLAATALTALIMG), serve as a signal peptide directing secretion. Residues asparagine 20 and asparagine 67 are each glycosylated (N-linked (GlcNAc...) asparagine). Positions 121-127 (QDRHFWE) match the Hepta-peptide GHRHDWE motif motif. Residue asparagine 166 is glycosylated (N-linked (GlcNAc...) asparagine).

The protein belongs to the Necrosis inducing protein (NPP1) family.

It localises to the secreted. Secreted effector that contributes strongly to virulence during infection by P.capsici. This is NLP effector protein Pc118356 from Phytophthora capsici.